A 451-amino-acid polypeptide reads, in one-letter code: Protein tweety homolog 1-B (451 aa).

Topologically, residues 1-43 (MSTSHGYRASWWTYILHQVPHTNFQFEVVDNQFAPQEWSYQQA) are extracellular. A helical transmembrane segment spans residues 44 to 64 (LLFLASIAGLCLAISLVLICV). At 65 to 86 (YLIKFCCCASQEDDDSKSHRVC) the chain is on the cytoplasmic side. A helical transmembrane segment spans residues 87 to 107 (CVTWSCVAAVIICCAGIGIGF). Topologically, residues 108-214 (YGNSETNDGV…QVNFIEDYRW (107 aa)) are extracellular. N128 carries N-linked (GlcNAc...) asparagine glycosylation. A helical transmembrane segment spans residues 215–235 (LAYILLLLLDLIICLFTLLSL). The Cytoplasmic segment spans residues 236–240 (AKQIK). Residues 241 to 261 (WLVIVMTVVSFFVLLLSWGSM) traverse the membrane as a helical segment. Over 262 to 390 (GLEMATAVGL…LKGLCYDGME (129 aa)) the chain is Extracellular. 2 disulfide bridges follow: C275–C385 and C303–C370. N-linked (GlcNAc...) asparagine glycosylation is found at N284 and N355. Residues 391-411 (GILFLLLFSFLSALSFTAAVC) form a helical membrane-spanning segment. Topologically, residues 412-451 (SLPRAWKRFRNRDLDYDDMDEDDPFNPQESKRFVQWQSSI) are cytoplasmic.

The protein belongs to the tweety family. In terms of assembly, homotetramer; disulfide-linked. Homodimer.

It localises to the cell membrane. It carries out the reaction chloride(in) = chloride(out). The enzyme catalyses L-glutamate(out) = L-glutamate(in). May act as a calcium-independent, swelling-dependent volume-regulated anion channel (VRAC-swell) which plays a pivotal role in the process of regulatory volume decrease (RVD) in the brain through the efflux of anions like chloride and organic osmolytes like glutamate. This chain is Protein tweety homolog 1-B (ttyh1-b), found in Xenopus laevis (African clawed frog).